A 467-amino-acid polypeptide reads, in one-letter code: Probable tryptophanase (467 aa).

Lys263 carries the N6-(pyridoxal phosphate)lysine modification.

It belongs to the beta-eliminating lyase family. Requires pyridoxal 5'-phosphate as cofactor.

The enzyme catalyses L-tryptophan + H2O = indole + pyruvate + NH4(+). It functions in the pathway amino-acid degradation; L-tryptophan degradation via pyruvate pathway; indole and pyruvate from L-tryptophan: step 1/1. The protein is Probable tryptophanase (tnaA) of Aeropyrum pernix (strain ATCC 700893 / DSM 11879 / JCM 9820 / NBRC 100138 / K1).